Reading from the N-terminus, the 216-residue chain is MIF4G domain-containing protein A (216 aa).

In terms of domain architecture, MIF4G spans 2 to 199 (DSAWTALDME…LEILEFRASG (198 aa)).

It belongs to the MIF4GD family. As to quaternary structure, interacts with eif4g1, eif4g2 and slbp; probably tethered by SLBP to the 3'-end of mRNAs ending with the histone stem-loop, it also interacts with eif4g1 which is bound to their 5'-end.

The protein localises to the cytoplasm. Its subcellular location is the nucleus. In terms of biological role, functions in replication-dependent translation of histone mRNAs which differ from other eukaryotic mRNAs in that they do not end with a poly-A tail but a stem-loop. May participate in circularizing those mRNAs specifically enhancing their translation. This Danio rerio (Zebrafish) protein is MIF4G domain-containing protein A (mif4gda).